A 376-amino-acid polypeptide reads, in one-letter code: Hydroxylysine kinase (376 aa).

Asp-229 functions as the Proton acceptor in the catalytic mechanism.

The protein belongs to the aminoglycoside phosphotransferase family.

The protein localises to the cytoplasm. The enzyme catalyses (5R)-5-hydroxy-L-lysine + GTP = (5R)-5-phosphooxy-L-lysine + GDP + H(+). In terms of biological role, catalyzes the GTP-dependent phosphorylation of 5-hydroxy-L-lysine. The chain is Hydroxylysine kinase (HYKK) from Bos taurus (Bovine).